The following is a 503-amino-acid chain: Cytochrome P450 11B1, mitochondrial (503 aa).

The transit peptide at 1 to 24 (MALRAKAEVCMAAPWLSLQRARAL) directs the protein to the mitochondrion. Heme is bound at residue Cys-450.

Belongs to the cytochrome P450 family. It depends on heme as a cofactor.

The protein resides in the mitochondrion inner membrane. It carries out the reaction a steroid + 2 reduced [adrenodoxin] + O2 + 2 H(+) = an 11beta-hydroxysteroid + 2 oxidized [adrenodoxin] + H2O. The catalysed reaction is 11-deoxycortisol + 2 reduced [adrenodoxin] + O2 + 2 H(+) = cortisol + 2 oxidized [adrenodoxin] + H2O. It catalyses the reaction 21-hydroxyprogesterone + 2 reduced [adrenodoxin] + O2 + 2 H(+) = corticosterone + 2 oxidized [adrenodoxin] + H2O. The enzyme catalyses 21-hydroxyprogesterone + 2 reduced [adrenodoxin] + O2 + 2 H(+) = 18-hydroxy-11-deoxycorticosterone + 2 oxidized [adrenodoxin] + H2O. It carries out the reaction 21-hydroxyprogesterone + 2 reduced [adrenodoxin] + O2 + 2 H(+) = 19-hydroxy-11-deoxycorticosterone + 2 oxidized [adrenodoxin] + H2O. The catalysed reaction is cortisol + 2 reduced [adrenodoxin] + O2 + 2 H(+) = 18-hydroxycortisol + 2 oxidized [adrenodoxin] + H2O. It catalyses the reaction 11-deoxycortisol + 2 reduced [adrenodoxin] + O2 + 2 H(+) = 18-hydroxy-11-deoxycortisol + 2 oxidized [adrenodoxin] + H2O. It participates in steroid biosynthesis; glucocorticoid biosynthesis. Its pathway is steroid hormone biosynthesis. A cytochrome P450 monooxygenase involved in the biosynthesis of adrenal corticoids. Catalyzes a variety of reactions that are essential for many species, including detoxification, defense, and the formation of endogenous chemicals like steroid hormones. Steroid 11beta, 18- and 19-hydroxylase with preferred regioselectivity at 11beta, then 18, and lastly 19. Catalyzes the hydroxylation of 11-deoxycortisol and 11-deoxycorticosterone (21-hydroxyprogesterone) at 11beta position, yielding cortisol or corticosterone, respectively, but cannot produce aldosterone. Mechanistically, uses molecular oxygen inserting one oxygen atom into a substrate for hydroxylation and reducing the second into a water molecule. Two electrons are provided by NADPH via a two-protein mitochondrial transfer system comprising flavoprotein FDXR (adrenodoxin/ferredoxin reductase) and nonheme iron-sulfur protein FDX1 or FDX2 (adrenodoxin/ferredoxin). Due to its lack of 18-oxidation activity, it is incapable of generating aldosterone. Could also be involved in the androgen metabolic pathway. The polypeptide is Cytochrome P450 11B1, mitochondrial (CYP11B1) (Papio hamadryas ursinus (Chacma baboon)).